A 1135-amino-acid chain; its full sequence is Topless-related protein 4 (1135 aa).

One can recognise a LisH domain in the interval 4–36 (LSRELVFLILQFLDEEKFKDTVHRLEKESGFFF). A CTLH domain is found at 34-92 (FFFNMRYFEDSVTAGEWDDVEKYLSGFTKVDDNRYSMKIFFEIRKQKYLEALDKKDHAK). Position 214 is a phosphoserine (Ser-214). The segment at 281-303 (LKRERPRSPPTNSLSMDYQTADS) is disordered. Residues 290–303 (PTNSLSMDYQTADS) show a composition bias toward polar residues. WD repeat units lie at residues 355–395 (SQGS…KLVS), 417–456 (EYTAAVNRVVWSPDGGLLGVAYSKHIVHIYSYHGGEDLRN), 462–503 (AHAG…KLHT), 506–547 (GHEA…SRVD), 550–593 (APGR…VKRT), 597–636 (LGKRSVGVVQFDTMKNKFLVAGDEFQVKFWDMDSVDLLSS), 638–680 (AAEG…RILH), 776–815 (LLPARVVKLIYTNSGGAILALAENAAHKLWKWQKSERNLL), 843–881 (NKEDVVPCFALSKNDSYVMSASGGKISLFNMMTFKTMTT), 884–924 (APPP…VKSK), 927–966 (GHQKRVTGLAFSNVLNVLVSSGADSQLCVWSMDGWEKQAS), and 1020–1059 (ESSGSVTDAVYSCDSQSIYAAFDDGSVSILTATTLQLKCR). The interval 1095-1135 (DGGVHVIEPPGPEGKWGISAPPENGAGPSVSSAPGSDQQPR) is disordered. Residues 1119 to 1135 (GAGPSVSSAPGSDQQPR) are compositionally biased toward low complexity.

In terms of assembly, tetramer. Interacts with WUS (via the C-terminal domain). Interacts with SPL (via EAR motif). Interacts with SPEAR3/TIE1. Binds to and corepresses GAF1/IDD2 at the promoter of GA20OX2 gene.

The protein localises to the nucleus. Functionally, transcription corepressor of Zinc finger transcription factors GAF1/IDD2 and ENY/IDD1 in regulation of gibberellin homeostasis and signaling. The polypeptide is Topless-related protein 4 (TPR4) (Arabidopsis thaliana (Mouse-ear cress)).